Consider the following 186-residue polypeptide: ATP synthase subunit delta, cyanelle (186 aa).

It belongs to the ATPase delta chain family. As to quaternary structure, F-type ATPases have 2 components, F(1) - the catalytic core - and F(0) - the membrane proton channel. F(1) has five subunits: alpha(3), beta(3), gamma(1), delta(1), epsilon(1). CF(0) has four main subunits: a(1), b(1), b'(1) and c(10-14). The alpha and beta chains form an alternating ring which encloses part of the gamma chain. F(1) is attached to F(0) by a central stalk formed by the gamma and epsilon chains, while a peripheral stalk is formed by the delta, b and b' chains.

The protein resides in the plastid. It localises to the cyanelle thylakoid membrane. Its function is as follows. F(1)F(0) ATP synthase produces ATP from ADP in the presence of a proton or sodium gradient. F-type ATPases consist of two structural domains, F(1) containing the extramembraneous catalytic core and F(0) containing the membrane proton channel, linked together by a central stalk and a peripheral stalk. During catalysis, ATP synthesis in the catalytic domain of F(1) is coupled via a rotary mechanism of the central stalk subunits to proton translocation. This protein is part of the stalk that links CF(0) to CF(1). It either transmits conformational changes from CF(0) to CF(1) or is implicated in proton conduction. The polypeptide is ATP synthase subunit delta, cyanelle (Cyanophora paradoxa).